The sequence spans 389 residues: NADH-dependent butanol dehydrogenase A (389 aa).

It belongs to the iron-containing alcohol dehydrogenase family. As to quaternary structure, homodimer.

It participates in alcohol metabolism; butanol biosynthesis. This Clostridium acetobutylicum (strain ATCC 824 / DSM 792 / JCM 1419 / IAM 19013 / LMG 5710 / NBRC 13948 / NRRL B-527 / VKM B-1787 / 2291 / W) protein is NADH-dependent butanol dehydrogenase A (bdhA).